The primary structure comprises 88 residues: Phosphocarrier protein HPr (88 aa).

The region spanning methionine 1–glutamate 88 is the HPr domain. Residue histidine 15 is the Pros-phosphohistidine intermediate of the active site. Serine 46 carries the phosphoserine; by HPrK/P modification.

This sequence belongs to the HPr family. In terms of assembly, monomer.

It localises to the cytoplasm. Phosphorylation on Ser-46 inhibits the phosphoryl transfer from enzyme I to HPr. General (non sugar-specific) component of the phosphoenolpyruvate-dependent sugar phosphotransferase system (sugar PTS). This major carbohydrate active-transport system catalyzes the phosphorylation of incoming sugar substrates concomitantly with their translocation across the cell membrane. The phosphoryl group from phosphoenolpyruvate (PEP) is transferred to the phosphoryl carrier protein HPr by enzyme I. Phospho-HPr then transfers it to the PTS EIIA domain. Its function is as follows. P-Ser-HPr interacts with the catabolite control protein A (CcpA), forming a complex that binds to DNA at the catabolite response elements cre, operator sites preceding a large number of catabolite-regulated genes. Thus, P-Ser-HPr is a corepressor in carbon catabolite repression (CCR), a mechanism that allows bacteria to coordinate and optimize the utilization of available carbon sources. P-Ser-HPr also plays a role in inducer exclusion, in which it probably interacts with several non-PTS permeases and inhibits their transport activity. The polypeptide is Phosphocarrier protein HPr (ptsH) (Enterococcus faecalis (strain ATCC 700802 / V583)).